A 592-amino-acid polypeptide reads, in one-letter code: RNA-binding protein 47 (592 aa).

The segment covering 1-24 has biased composition (low complexity); sequence MTAEDAAAAMSSDSAAGGAASAKA. The tract at residues 1-26 is disordered; that stretch reads MTAEDAAAAMSSDSAAGGAASAKAPE. 3 consecutive RRM domains span residues 73–151, 153–235, and 248–320; these read CEVF…CSVD, CRLF…WAEP, and KILY…LAKP. Arg-397 and Arg-408 each carry asymmetric dimethylarginine; alternate. Omega-N-methylarginine; alternate occurs at positions 397 and 408.

Belongs to the RRM RBM47 family. Homodimer. Interacts with A1CF. Interacts with APOBEC1; form an mRNA editing complex. Interacts with RBPMS.

It is found in the nucleus. The protein resides in the cytoplasm. Functionally, single-stranded RNA-binding protein that functions in a variety of RNA processes, including alternative splicing, RNA stabilization, and RNA editing. Functions as an enzyme-substrate adapter for the cytidine deaminase APOBEC1. With APOBEC1 forms an mRNA editing complex involved into cytidine to uridine editing of a variety of mRNA molecules. Through the binding of their 3'UTR, also stabilizes a variety of mRNAs and regulates the expression of genes such as the interferon alpha/beta receptor and interleukin-10. Also involved in the alternative splicing of several genes including TJP1. Binds the pre-mRNA (U)GCAUG consensus sequences in downstream intronic regions of alternative exons, regulating their exclusion and inclusion into mRNAs. Independently of its RNA-binding activity, could negatively regulate MAVS by promoting its lysosomal degradation. The protein is RNA-binding protein 47 of Canis lupus familiaris (Dog).